The sequence spans 396 residues: Phosphoglycerate kinase (396 aa).

Residues 21 to 23 (DFN), arginine 37, 60 to 63 (HLGR), arginine 121, and arginine 154 each bind substrate. ATP is bound by residues lysine 205, glycine 296, glutamate 327, and 353 to 356 (GGDS).

The protein belongs to the phosphoglycerate kinase family. In terms of assembly, monomer.

Its subcellular location is the cytoplasm. The catalysed reaction is (2R)-3-phosphoglycerate + ATP = (2R)-3-phospho-glyceroyl phosphate + ADP. It participates in carbohydrate degradation; glycolysis; pyruvate from D-glyceraldehyde 3-phosphate: step 2/5. The sequence is that of Phosphoglycerate kinase from Anaeromyxobacter dehalogenans (strain 2CP-1 / ATCC BAA-258).